The following is a 29-amino-acid chain: Kalata-B15 (29 aa).

Residues 1 to 29 (GLPVCGESCFGGSCYTPGCSCTWPICTRD) constitute a cross-link (cyclopeptide (Gly-Asp)). 3 cysteine pairs are disulfide-bonded: cysteine 5–cysteine 19, cysteine 9–cysteine 21, and cysteine 14–cysteine 26.

Post-translationally, this is a cyclic peptide.

Probably participates in a plant defense mechanism. The sequence is that of Kalata-B15 from Oldenlandia affinis.